The following is a 213-amino-acid chain: Uridine kinase (213 aa).

Residue 15 to 22 (GASASGKS) participates in ATP binding.

The protein belongs to the uridine kinase family.

Its subcellular location is the cytoplasm. It catalyses the reaction uridine + ATP = UMP + ADP + H(+). The catalysed reaction is cytidine + ATP = CMP + ADP + H(+). It participates in pyrimidine metabolism; CTP biosynthesis via salvage pathway; CTP from cytidine: step 1/3. The protein operates within pyrimidine metabolism; UMP biosynthesis via salvage pathway; UMP from uridine: step 1/1. The sequence is that of Uridine kinase from Pectobacterium atrosepticum (strain SCRI 1043 / ATCC BAA-672) (Erwinia carotovora subsp. atroseptica).